The chain runs to 90 residues: Accessory gland-specific peptide 26Ab (90 aa).

The N-terminal stretch at 1-21 (MNYFAVLCIFSCICLWQFSDA) is a signal peptide.

Main cells of the accessory glands of males.

It is found in the secreted. Its subcellular location is the extracellular space. Its function is as follows. This protein is transferred from male to female during mating and may affect egglaying and behavior after mating. The chain is Accessory gland-specific peptide 26Ab (Acp26Ab) from Drosophila sechellia (Fruit fly).